A 507-amino-acid polypeptide reads, in one-letter code: ATP synthase subunit alpha, chloroplastic (507 aa).

170–177 lines the ATP pocket; it reads GDRQTGKT.

Belongs to the ATPase alpha/beta chains family. F-type ATPases have 2 components, CF(1) - the catalytic core - and CF(0) - the membrane proton channel. CF(1) has five subunits: alpha(3), beta(3), gamma(1), delta(1), epsilon(1). CF(0) has four main subunits: a, b, b' and c.

The protein localises to the plastid. It localises to the chloroplast thylakoid membrane. It carries out the reaction ATP + H2O + 4 H(+)(in) = ADP + phosphate + 5 H(+)(out). Its function is as follows. Produces ATP from ADP in the presence of a proton gradient across the membrane. The alpha chain is a regulatory subunit. The polypeptide is ATP synthase subunit alpha, chloroplastic (Gossypium hirsutum (Upland cotton)).